The following is a 518-amino-acid chain: Bifunctional enzyme NanE/NanK (518 aa).

The tract at residues 1 to 234 (MCRVQGMIEE…DAVESAAKPS (234 aa)) is manNAc-6-P epimerase. A manNAc kinase region spans residues 235-518 (SPVLAFDIGG…VADLAATYFS (284 aa)). Residues 239–246 (AFDIGGTK) and 365–372 (GIGGGIVL) contribute to the ATP site.

The protein in the N-terminal section; belongs to the NanE family. It in the C-terminal section; belongs to the ROK (NagC/XylR) family. NanK subfamily.

The catalysed reaction is an N-acyl-D-glucosamine 6-phosphate = an N-acyl-D-mannosamine 6-phosphate. The enzyme catalyses an N-acyl-D-mannosamine + ATP = an N-acyl-D-mannosamine 6-phosphate + ADP + H(+). The protein operates within amino-sugar metabolism; N-acetylneuraminate degradation; D-fructose 6-phosphate from N-acetylneuraminate: step 2/5. Its pathway is amino-sugar metabolism; N-acetylneuraminate degradation; D-fructose 6-phosphate from N-acetylneuraminate: step 3/5. Functionally, converts N-acetylmannosamine-6-phosphate (ManNAc-6-P) to N-acetylglucosamine-6-phosphate (GlcNAc-6-P). Its function is as follows. Catalyzes the phosphorylation of N-acetylmannosamine (ManNAc) to ManNAc-6-P. The sequence is that of Bifunctional enzyme NanE/NanK (nanEK) from Brucella melitensis biotype 1 (strain ATCC 23456 / CCUG 17765 / NCTC 10094 / 16M).